The following is a 141-amino-acid chain: Nucleoside diphosphate kinase (141 aa).

ATP contacts are provided by Lys11, Phe59, Arg87, Thr93, Arg104, and Asn114. Residue His117 is the Pros-phosphohistidine intermediate of the active site.

It belongs to the NDK family. In terms of assembly, homotetramer. It depends on Mg(2+) as a cofactor.

It localises to the cytoplasm. It carries out the reaction a 2'-deoxyribonucleoside 5'-diphosphate + ATP = a 2'-deoxyribonucleoside 5'-triphosphate + ADP. The catalysed reaction is a ribonucleoside 5'-diphosphate + ATP = a ribonucleoside 5'-triphosphate + ADP. Its function is as follows. Major role in the synthesis of nucleoside triphosphates other than ATP. The ATP gamma phosphate is transferred to the NDP beta phosphate via a ping-pong mechanism, using a phosphorylated active-site intermediate. The sequence is that of Nucleoside diphosphate kinase from Nitrosospira multiformis (strain ATCC 25196 / NCIMB 11849 / C 71).